Here is a 329-residue protein sequence, read N- to C-terminus: GTP 3',8-cyclase (329 aa).

A Radical SAM core domain is found at 8 to 234; the sequence is AFARKFYYLR…QQRARSDGPA (227 aa). Position 17 (R17) interacts with GTP. [4Fe-4S] cluster contacts are provided by C24 and C28. Y30 is an S-adenosyl-L-methionine binding site. C31 is a binding site for [4Fe-4S] cluster. GTP is bound at residue R68. G72 provides a ligand contact to S-adenosyl-L-methionine. T99 serves as a coordination point for GTP. S-adenosyl-L-methionine is bound at residue S123. Position 160 (K160) interacts with GTP. M194 contributes to the S-adenosyl-L-methionine binding site. 2 residues coordinate [4Fe-4S] cluster: C257 and C260. 262–264 provides a ligand contact to GTP; sequence RLR. Residue C274 coordinates [4Fe-4S] cluster.

This sequence belongs to the radical SAM superfamily. MoaA family. In terms of assembly, monomer and homodimer. Requires [4Fe-4S] cluster as cofactor.

The catalysed reaction is GTP + AH2 + S-adenosyl-L-methionine = (8S)-3',8-cyclo-7,8-dihydroguanosine 5'-triphosphate + 5'-deoxyadenosine + L-methionine + A + H(+). It functions in the pathway cofactor biosynthesis; molybdopterin biosynthesis. Catalyzes the cyclization of GTP to (8S)-3',8-cyclo-7,8-dihydroguanosine 5'-triphosphate. This Pectobacterium atrosepticum (strain SCRI 1043 / ATCC BAA-672) (Erwinia carotovora subsp. atroseptica) protein is GTP 3',8-cyclase.